The following is a 544-amino-acid chain: Apolipoprotein N-acyltransferase 1 (544 aa).

A run of 6 helical transmembrane segments spans residues 30 to 50, 57 to 79, 91 to 111, 115 to 135, 157 to 177, and 197 to 217; these read LNLN…FLLL, FSFL…WIIF, KYCI…SYFS, FIFQ…GFLG, IFGV…SASF, and PMMI…FTKI. One can recognise a CN hydrolase domain in the interval 225-501; the sequence is ARIALVQPNR…KDILVADVTV (277 aa). The Proton acceptor role is filled by Glu-272. Lys-360 is a catalytic residue. Catalysis depends on Cys-412, which acts as the Nucleophile. Residues 514–534 traverse the membrane as a helical segment; that stretch reads GDFFGVLCTIVLILNLCFIII.

Belongs to the CN hydrolase family. Apolipoprotein N-acyltransferase subfamily.

It is found in the cell inner membrane. It catalyses the reaction N-terminal S-1,2-diacyl-sn-glyceryl-L-cysteinyl-[lipoprotein] + a glycerophospholipid = N-acyl-S-1,2-diacyl-sn-glyceryl-L-cysteinyl-[lipoprotein] + a 2-acyl-sn-glycero-3-phospholipid + H(+). It functions in the pathway protein modification; lipoprotein biosynthesis (N-acyl transfer). Functionally, catalyzes the phospholipid dependent N-acylation of the N-terminal cysteine of apolipoprotein, the last step in lipoprotein maturation. This is Apolipoprotein N-acyltransferase 1 from Treponema denticola (strain ATCC 35405 / DSM 14222 / CIP 103919 / JCM 8153 / KCTC 15104).